The sequence spans 1017 residues: Probable beta-galactosidase B (1017 aa).

The first 20 residues, 1–20 (MTRITKLCVLLLSSIGLLAA), serve as a signal peptide directing secretion. N-linked (GlcNAc...) asparagine glycosylation occurs at Asn23. Tyr90 contacts substrate. An N-linked (GlcNAc...) asparagine glycan is attached at Asn100. Substrate contacts are provided by Asn135, Ala136, and Glu137. Asn158 carries N-linked (GlcNAc...) asparagine glycosylation. Asn195 contributes to the substrate binding site. Glu196 functions as the Proton donor in the catalytic mechanism. An N-linked (GlcNAc...) asparagine glycan is attached at Asn211. A substrate-binding site is contributed by Tyr265. An intrachain disulfide couples Cys271 to Cys324. The active-site Nucleophile is the Glu308. Residue Tyr373 coordinates substrate. N-linked (GlcNAc...) asparagine glycosylation is found at Asn411, Asn417, Asn456, Asn628, Asn681, Asn737, Asn770, Asn777, Asn785, Asn828, and Asn829.

It belongs to the glycosyl hydrolase 35 family.

It localises to the secreted. It carries out the reaction Hydrolysis of terminal non-reducing beta-D-galactose residues in beta-D-galactosides.. Cleaves beta-linked terminal galactosyl residues from gangliosides, glycoproteins, and glycosaminoglycans. The protein is Probable beta-galactosidase B (lacB) of Aspergillus niger (strain ATCC MYA-4892 / CBS 513.88 / FGSC A1513).